We begin with the raw amino-acid sequence, 248 residues long: Small ribosomal subunit protein uS3 (248 aa).

The KH type-2 domain maps to 38-106 (VREYLVKTLD…QVALNILEVK (69 aa)). Residues 213 to 230 (ESEINAPAERRGRGDRNG) are compositionally biased toward basic and acidic residues. Residues 213–248 (ESEINAPAERRGRGDRNGRPRRGGQRRQRSEQKQEG) form a disordered region.

Belongs to the universal ribosomal protein uS3 family. In terms of assembly, part of the 30S ribosomal subunit. Forms a tight complex with proteins S10 and S14.

Its function is as follows. Binds the lower part of the 30S subunit head. Binds mRNA in the 70S ribosome, positioning it for translation. This chain is Small ribosomal subunit protein uS3, found in Corynebacterium diphtheriae (strain ATCC 700971 / NCTC 13129 / Biotype gravis).